We begin with the raw amino-acid sequence, 338 residues long: Ketol-acid reductoisomerase (NADP(+)) (338 aa).

Residues Met1–Thr181 form the KARI N-terminal Rossmann domain. NADP(+)-binding positions include Tyr24–Gln27, Arg47, and Ser52. The active site involves His107. Gly133 is a binding site for NADP(+). Residues Asn182 to Ile327 form the KARI C-terminal knotted domain. Residues Asp190, Glu194, Glu226, and Glu230 each coordinate Mg(2+). Position 251 (Ser251) interacts with substrate.

Belongs to the ketol-acid reductoisomerase family. Mg(2+) serves as cofactor.

It catalyses the reaction (2R)-2,3-dihydroxy-3-methylbutanoate + NADP(+) = (2S)-2-acetolactate + NADPH + H(+). The enzyme catalyses (2R,3R)-2,3-dihydroxy-3-methylpentanoate + NADP(+) = (S)-2-ethyl-2-hydroxy-3-oxobutanoate + NADPH + H(+). It functions in the pathway amino-acid biosynthesis; L-isoleucine biosynthesis; L-isoleucine from 2-oxobutanoate: step 2/4. Its pathway is amino-acid biosynthesis; L-valine biosynthesis; L-valine from pyruvate: step 2/4. Involved in the biosynthesis of branched-chain amino acids (BCAA). Catalyzes an alkyl-migration followed by a ketol-acid reduction of (S)-2-acetolactate (S2AL) to yield (R)-2,3-dihydroxy-isovalerate. In the isomerase reaction, S2AL is rearranged via a Mg-dependent methyl migration to produce 3-hydroxy-3-methyl-2-ketobutyrate (HMKB). In the reductase reaction, this 2-ketoacid undergoes a metal-dependent reduction by NADPH to yield (R)-2,3-dihydroxy-isovalerate. The protein is Ketol-acid reductoisomerase (NADP(+)) of Azoarcus sp. (strain BH72).